The chain runs to 513 residues: NAD(P)H-quinone oxidoreductase subunit 2 (513 aa).

The next 14 membrane-spanning stretches (helical) occupy residues 12–32, 41–61, 77–97, 104–124, 130–150, 165–185, 199–219, 238–258, 272–292, 300–320, 328–348, 372–392, 394–414, and 456–476; these read TLWP…VDLI, LPYL…PMWI, LSVV…LMSV, SLAT…AMLL, MAMI…LSGY, LLIG…LYGF, IVNL…GICF, PTPV…ALAI, WQTL…VVAI, MLAY…AIGT, ILYI…VVLF, LVLS…GFFG, LYLF…FGLV, and AGML…PPLI. The segment covering 494–505 has biased composition (polar residues); it reads TATPVSRVSTGA. Residues 494–513 are disordered; it reads TATPVSRVSTGAQAPADHGR.

This sequence belongs to the complex I subunit 2 family. In terms of assembly, NDH-1 can be composed of about 15 different subunits; different subcomplexes with different compositions have been identified which probably have different functions.

The protein resides in the cell inner membrane. The catalysed reaction is a plastoquinone + NADH + (n+1) H(+)(in) = a plastoquinol + NAD(+) + n H(+)(out). It carries out the reaction a plastoquinone + NADPH + (n+1) H(+)(in) = a plastoquinol + NADP(+) + n H(+)(out). NDH-1 shuttles electrons from an unknown electron donor, via FMN and iron-sulfur (Fe-S) centers, to quinones in the respiratory and/or the photosynthetic chain. The immediate electron acceptor for the enzyme in this species is believed to be plastoquinone. Couples the redox reaction to proton translocation, and thus conserves the redox energy in a proton gradient. Cyanobacterial NDH-1 also plays a role in inorganic carbon-concentration. The sequence is that of NAD(P)H-quinone oxidoreductase subunit 2 from Gloeobacter violaceus (strain ATCC 29082 / PCC 7421).